The sequence spans 464 residues: Putative dipeptidase CPC735_014430 (464 aa).

The tract at residues 1 to 34 (MSTMSARDNEKGSARSQPSHAAASEIENVPRPSR) is disordered. The chain crosses the membrane as a helical span at residues 40–56 (GTMIKVFIICACAGIVS). The Zn(2+) site is built by histidine 93, aspartate 95, and glutamate 206. Cysteine 145 and cysteine 235 are oxidised to a cystine. Histidine 233 is a substrate binding site. Zn(2+)-binding residues include histidine 277 and histidine 298. Substrate contacts are provided by arginine 309 and aspartate 369. The N-linked (GlcNAc...) asparagine glycan is linked to asparagine 382.

This sequence belongs to the metallo-dependent hydrolases superfamily. Peptidase M19 family. Zn(2+) is required as a cofactor.

The protein localises to the membrane. The enzyme catalyses an L-aminoacyl-L-amino acid + H2O = 2 an L-alpha-amino acid. Functionally, hydrolyzes a wide range of dipeptides. The polypeptide is Putative dipeptidase CPC735_014430 (Coccidioides posadasii (strain C735) (Valley fever fungus)).